A 196-amino-acid polypeptide reads, in one-letter code: GTP cyclohydrolase 1 (196 aa).

Cys-84, His-87, and Cys-157 together coordinate Zn(2+).

It belongs to the GTP cyclohydrolase I family. Toroid-shaped homodecamer, composed of two pentamers of five dimers.

It catalyses the reaction GTP + H2O = 7,8-dihydroneopterin 3'-triphosphate + formate + H(+). It functions in the pathway cofactor biosynthesis; 7,8-dihydroneopterin triphosphate biosynthesis; 7,8-dihydroneopterin triphosphate from GTP: step 1/1. This is GTP cyclohydrolase 1 from Corynebacterium glutamicum (strain ATCC 13032 / DSM 20300 / JCM 1318 / BCRC 11384 / CCUG 27702 / LMG 3730 / NBRC 12168 / NCIMB 10025 / NRRL B-2784 / 534).